Reading from the N-terminus, the 179-residue chain is Nucleoside-triphosphatase THEP1 (179 aa).

Residues 7-14 (GRPGVGKT) and 94-101 (LIIVDEIG) contribute to the ATP site.

It belongs to the THEP1 NTPase family.

It catalyses the reaction a ribonucleoside 5'-triphosphate + H2O = a ribonucleoside 5'-diphosphate + phosphate + H(+). Its function is as follows. Has nucleotide phosphatase activity towards ATP, GTP, CTP, TTP and UTP. May hydrolyze nucleoside diphosphates with lower efficiency. The protein is Nucleoside-triphosphatase THEP1 of Thermotoga petrophila (strain ATCC BAA-488 / DSM 13995 / JCM 10881 / RKU-1).